The primary structure comprises 113 residues: U11-theraphotoxin-Hhn1n (113 aa).

Positions methionine 1–alanine 21 are cleaved as a signal peptide. A propeptide spanning residues aspartate 22–arginine 74 is cleaved from the precursor. Basic and acidic residues predominate over residues leucine 60–asparagine 69. Residues leucine 60–aspartate 83 form a disordered region. 2 disulfides stabilise this stretch: cysteine 75-cysteine 90 and cysteine 89-cysteine 110.

This sequence belongs to the neurotoxin 14 (magi-1) family. 01 (HNTX-16) subfamily. In terms of tissue distribution, expressed by the venom gland.

Its subcellular location is the secreted. Functionally, probable ion channel inhibitor. The sequence is that of U11-theraphotoxin-Hhn1n from Cyriopagopus hainanus (Chinese bird spider).